We begin with the raw amino-acid sequence, 119 residues long: Mitochondrial coiled-coil domain protein 1 (119 aa).

The N-terminal 24 residues, 1 to 24 (MVLPLPWLSRYHFLRLLLPSWSLA), are a transit peptide targeting the mitochondrion. The interval 25-65 (PQGSHGCCSQNPKASMEEQTSSRGNGKMTSPPRGPGTHRTA) is disordered. Residues 31 to 52 (CCSQNPKASMEEQTSSRGNGKM) show a composition bias toward polar residues. The stretch at 62–116 (HRTAELARAEELLEQQLELYQALLEGQEGAWEAQALVLKIQKLKEQMRRHQESLG) forms a coiled coil.

In terms of tissue distribution, widely expressed. Expressed in adult and fetal liver, kidney and lung. Expressed in fetal brain. Weakly expressed in fetal spleen.

The protein resides in the mitochondrion. The protein is Mitochondrial coiled-coil domain protein 1 (MCCD1) of Homo sapiens (Human).